Reading from the N-terminus, the 359-residue chain is Norspermidine sensor (359 aa).

The signal sequence occupies residues 1–33 (MTNFCNEWVSYSQMIKRFLSLMVLNTVCYQASA).

It belongs to the bacterial solute-binding protein PotD/PotF family.

The protein localises to the periplasm. Acts as a sensor of norspermidine and enhances biofilm formation. When complexed to norspermidine, could interact with the periplasmic portion of MbaA to regulate its enzymatic activity. This chain is Norspermidine sensor (nspS), found in Vibrio cholerae serotype O1 (strain ATCC 39315 / El Tor Inaba N16961).